The chain runs to 500 residues: Na(+)/H(+) antiporter NhaB (500 aa).

12 consecutive transmembrane segments (helical) span residues 34–54 (PLFF…EFIF), 62–82 (CYPL…GMTT), 90–110 (LVHN…IYFM), 129–149 (ALLG…LDAL), 150–170 (TVTA…HRVA), 205–225 (LLMH…VGEP), 241–261 (FFSK…VTCV), 311–331 (ILIV…LLVI), 350–370 (FKDA…VAVI), 394–414 (MLFI…VATI), 449–469 (VATP…IAPL), and 477–497 (MVWM…YAVS).

This sequence belongs to the NhaB Na(+)/H(+) (TC 2.A.34) antiporter family.

Its subcellular location is the cell inner membrane. The catalysed reaction is 2 Na(+)(in) + 3 H(+)(out) = 2 Na(+)(out) + 3 H(+)(in). Functionally, na(+)/H(+) antiporter that extrudes sodium in exchange for external protons. This chain is Na(+)/H(+) antiporter NhaB, found in Pseudomonas fluorescens (strain ATCC BAA-477 / NRRL B-23932 / Pf-5).